The primary structure comprises 321 residues: Phosphate-import protein PhnD (321 aa).

The signal sequence occupies residues 1 to 22 (MKIRAHHKIATAAACVALLASA). C23 carries the N-palmitoyl cysteine lipid modification. C23 carries S-diacylglycerol cysteine lipidation.

It belongs to the phosphate/phosphite/phosphonate binding protein family. As to quaternary structure, the complex is composed of two ATP-binding proteins (PhnC), two transmembrane proteins (PhnE) and a solute-binding protein (PhnD).

Its subcellular location is the cell membrane. Its function is as follows. Part of the ABC transporter complex PhnCDE involved in phosphate import. Responsible for phosphate binding. The protein is Phosphate-import protein PhnD (phnD) of Mycolicibacterium smegmatis (strain ATCC 700084 / mc(2)155) (Mycobacterium smegmatis).